The primary structure comprises 132 residues: Large ribosomal subunit protein uL24 (132 aa).

It belongs to the universal ribosomal protein uL24 family. As to quaternary structure, part of the 50S ribosomal subunit.

In terms of biological role, one of two assembly initiator proteins, it binds directly to the 5'-end of the 23S rRNA, where it nucleates assembly of the 50S subunit. Its function is as follows. One of the proteins that surrounds the polypeptide exit tunnel on the outside of the subunit. In Synechococcus sp. (strain JA-2-3B'a(2-13)) (Cyanobacteria bacterium Yellowstone B-Prime), this protein is Large ribosomal subunit protein uL24.